The following is a 185-amino-acid chain: Bcl-2-like protein 10 (185 aa).

The short motif at 76 to 95 (LSNDQEFNWGRLVMLLAFVG) is the BH1 element. The short motif at 138–149 (WLEAHGGWDGFC) is the BH2 element. Residues 160 to 182 (FWRRLLIRAILSCFFATAIFYIW) traverse the membrane as a helical segment.

The protein belongs to the Bcl-2 family. In terms of assembly, interacts with BAX. Interacts with BCL2, BCL2L1/BCLX. Interacts with APAF1. Interacts with ITPR1, ITPR2 and ITPR3; the interaction with ITPR1 is increased in the presence of AHCLY1. Interacts with AHCYL1. Interacts with HIP1R (via ENTH and I/LWEQ domains). Interacts with CASP9. Interacts with BCL2L11/BIM. Interacts with BIK. Interacts with UBQLN4. Interacts with NME2/NM23-H2. Interacts with and PMAIP1/NOXA. Interacts with TPX2. Interacts with UBQLN1; in the cytoplasm. Interacts (via BH1 domain) with BECN1. Ca(2+) serves as cofactor. Post-translationally, monoubiquitinated by UBQLN1; results in stabilization of BCL2L10 protein abundance and in relocalization from mitochondria to cytoplasm. As to expression, expressed in oligodendroglial lineage cells.

Its subcellular location is the mitochondrion. The protein resides in the nucleus membrane. It is found in the endoplasmic reticulum. The protein localises to the cytoplasm. It localises to the cytoskeleton. Its subcellular location is the spindle. In terms of biological role, promotes cell survival by suppressing apoptosis induced by BAX but not BAK. Increases binding of AHCYL1/IRBIT to ITPR1. Reduces ITPR1-mediated calcium release from the endoplasmic reticulum cooperatively with AHCYL1/IRBIT under normal cellular conditions. Under apoptotic stress conditions, dissociates from ITPR1 and is displaced from mitochondria-associated endoplasmic reticulum membranes, leading to increased Ca(2+) transfer to mitochondria which promotes apoptosis. Required for the correct formation of the microtubule organizing center during oocyte cell division, potentially via regulation of protein abundance and localization of other microtubule organizing center components such as AURKA and TPX2. The sequence is that of Bcl-2-like protein 10 from Rattus norvegicus (Rat).